A 338-amino-acid polypeptide reads, in one-letter code: Cell division protein ZipA (338 aa).

At Met-1–Ser-2 the chain is on the periplasmic side. Residues Leu-3–Val-23 traverse the membrane as a helical segment. Over Arg-24 to Ala-338 the chain is Cytoplasmic. The disordered stretch occupies residues Ser-33–Asn-192. 2 stretches are compositionally biased toward basic and acidic residues: residues Thr-70–Met-81 and Glu-138–Glu-162.

The protein belongs to the ZipA family. Interacts with FtsZ via their C-terminal domains.

It is found in the cell inner membrane. Functionally, essential cell division protein that stabilizes the FtsZ protofilaments by cross-linking them and that serves as a cytoplasmic membrane anchor for the Z ring. Also required for the recruitment to the septal ring of downstream cell division proteins. In Marinobacter nauticus (strain ATCC 700491 / DSM 11845 / VT8) (Marinobacter aquaeolei), this protein is Cell division protein ZipA.